Consider the following 358-residue polypeptide: Peptide chain release factor 1 (358 aa).

Position 233 is an N5-methylglutamine (Gln233).

It belongs to the prokaryotic/mitochondrial release factor family. In terms of processing, methylated by PrmC. Methylation increases the termination efficiency of RF1.

The protein resides in the cytoplasm. Its function is as follows. Peptide chain release factor 1 directs the termination of translation in response to the peptide chain termination codons UAG and UAA. This is Peptide chain release factor 1 from Flavobacterium johnsoniae (strain ATCC 17061 / DSM 2064 / JCM 8514 / BCRC 14874 / CCUG 350202 / NBRC 14942 / NCIMB 11054 / UW101) (Cytophaga johnsonae).